The sequence spans 113 residues: Large ribosomal subunit protein eL31 (113 aa).

The protein belongs to the eukaryotic ribosomal protein eL31 family.

The chain is Large ribosomal subunit protein eL31 (RPL31) from Candida glabrata (strain ATCC 2001 / BCRC 20586 / JCM 3761 / NBRC 0622 / NRRL Y-65 / CBS 138) (Yeast).